Consider the following 298-residue polypeptide: Protoheme IX farnesyltransferase (298 aa).

A run of 9 helical transmembrane segments spans residues 26–46, 52–72, 93–113, 120–140, 148–168, 174–194, 219–239, 241–261, and 278–298; these read VVSLIVFTAVIGMFLSVPGAV, IFGTVGISLVAGAAAALNCLV, VSVPETLFFLVLIGGFGLFML, LTMWLTLGTFVGYAIIYTVIL, IVIGGASGAMPPVLGWAAVTG, ALLLFLIIFAWTPPHFWALAL, LHVLLYTIILCVVTVLPYLTQ, SGLIYLGSVLILDAIFFYYAI, and YSIAYLALLFTALLVDHYFYF.

The protein belongs to the UbiA prenyltransferase family. Protoheme IX farnesyltransferase subfamily.

Its subcellular location is the cell inner membrane. The catalysed reaction is heme b + (2E,6E)-farnesyl diphosphate + H2O = Fe(II)-heme o + diphosphate. It functions in the pathway porphyrin-containing compound metabolism; heme O biosynthesis; heme O from protoheme: step 1/1. Converts heme B (protoheme IX) to heme O by substitution of the vinyl group on carbon 2 of heme B porphyrin ring with a hydroxyethyl farnesyl side group. This chain is Protoheme IX farnesyltransferase, found in Nitrosomonas europaea (strain ATCC 19718 / CIP 103999 / KCTC 2705 / NBRC 14298).